The sequence spans 353 residues: Beta-hexosaminidase (353 aa).

Substrate-binding positions include Asp-74, Arg-82, Arg-149, and 179 to 180; that span reads KH. His-192 acts as the Proton donor/acceptor in catalysis. Asp-263 (nucleophile) is an active-site residue.

The protein belongs to the glycosyl hydrolase 3 family. NagZ subfamily.

It localises to the cytoplasm. The enzyme catalyses Hydrolysis of terminal non-reducing N-acetyl-D-hexosamine residues in N-acetyl-beta-D-hexosaminides.. It functions in the pathway cell wall biogenesis; peptidoglycan recycling. In terms of biological role, plays a role in peptidoglycan recycling by cleaving the terminal beta-1,4-linked N-acetylglucosamine (GlcNAc) from peptide-linked peptidoglycan fragments, giving rise to free GlcNAc, anhydro-N-acetylmuramic acid and anhydro-N-acetylmuramic acid-linked peptides. This Bordetella bronchiseptica (strain ATCC BAA-588 / NCTC 13252 / RB50) (Alcaligenes bronchisepticus) protein is Beta-hexosaminidase.